The sequence spans 804 residues: E3 ubiquitin-protein ligase RNF10 (804 aa).

Low complexity-rich tracts occupy residues 1 to 31, 78 to 90, and 104 to 113; these read MPQS…SGSS, SNQS…QKSK, and SKPFSSSSNG. The interval 1–134 is disordered; that stretch reads MPQSSPSAAA…AEFSPAQFSG (134 aa). A Phosphoserine modification is found at Ser-5. The residue at position 110 (Ser-110) is a Phosphoserine. Over residues 114 to 124 the composition is skewed to basic and acidic residues; sequence GRRDEVAEAQR. Ser-128 is modified (phosphoserine). The segment at 225-267 adopts an RING-type zinc-finger fold; it reads CPICLYPPTAAKITRCGHIFCWACILHYLSLSEKTWSKCPICY. Disordered stretches follow at residues 589–611, 646–665, and 715–804; these read DIEK…ERRI, DSAL…LSPL, and KADG…VHTK. Residues 601 to 611 are compositionally biased toward basic and acidic residues; sequence AREERRRERRI. A compositionally biased stretch (polar residues) spans 646-655; sequence DSALGPTSTE. The span at 715-729 shows a compositional bias: basic and acidic residues; that stretch reads KADGWPKTAPKKDDN. Residues 795 to 804 are compositionally biased toward polar residues; that stretch reads LFSTSVVHTK.

It belongs to the RNF10 family. Interacts with MEOX2.

The protein resides in the cytoplasm. Its subcellular location is the nucleus. The enzyme catalyses S-ubiquitinyl-[E2 ubiquitin-conjugating enzyme]-L-cysteine + [acceptor protein]-L-lysine = [E2 ubiquitin-conjugating enzyme]-L-cysteine + N(6)-ubiquitinyl-[acceptor protein]-L-lysine.. Its pathway is protein modification; protein ubiquitination. In terms of biological role, E3 ubiquitin-protein ligase that catalyzes monoubiquitination of 40S ribosomal proteins RPS2/us5 and RPS3/us3 in response to ribosome stalling. Part of a ribosome quality control that takes place when ribosomes have stalled during translation initiation (iRQC): RNF10 acts by mediating monoubiquitination of RPS2/us5 and RPS3/us3, promoting their degradation by the proteasome. Also promotes ubiquitination of 40S ribosomal proteins in response to ribosome stalling during translation elongation. The action of RNF10 in iRQC is counteracted by USP10. May also act as a transcriptional factor involved in the regulation of MAG (Myelin-associated glycoprotein) expression. Acts as a regulator of Schwann cell differentiation and myelination. The chain is E3 ubiquitin-protein ligase RNF10 from Mus musculus (Mouse).